We begin with the raw amino-acid sequence, 592 residues long: E3 ubiquitin-protein ligase RNF180 (592 aa).

Residues 1-564 are Cytoplasmic-facing; sequence MKRSKELITK…DSRGWWFDMD (564 aa). A Phosphoserine modification is found at S230. An RING-type zinc finger spans residues 432-474; the sequence is CAVCLDVYFNPYMCYPCRHIFCEPCLRTLAKDNPSSTPCPLCR. Residues 565 to 585 form a helical membrane-spanning segment; the sequence is MVIIYIYSVNWVIGFIVFCFL. At 586–592 the chain is on the extracellular side; it reads CYFFFPF.

In terms of assembly, interacts with ZIC2.

The protein resides in the endoplasmic reticulum membrane. It is found in the nucleus envelope. It carries out the reaction S-ubiquitinyl-[E2 ubiquitin-conjugating enzyme]-L-cysteine + [acceptor protein]-L-lysine = [E2 ubiquitin-conjugating enzyme]-L-cysteine + N(6)-ubiquitinyl-[acceptor protein]-L-lysine.. The protein operates within protein modification; protein ubiquitination. In terms of biological role, E3 ubiquitin-protein ligase which promotes polyubiquitination and degradation by the proteasome pathway of ZIC2. The sequence is that of E3 ubiquitin-protein ligase RNF180 (RNF180) from Pongo abelii (Sumatran orangutan).